A 147-amino-acid chain; its full sequence is 3-hydroxyacyl-[acyl-carrier-protein] dehydratase FabZ (147 aa).

The active site involves His50.

Belongs to the thioester dehydratase family. FabZ subfamily.

It is found in the cytoplasm. The catalysed reaction is a (3R)-hydroxyacyl-[ACP] = a (2E)-enoyl-[ACP] + H2O. Functionally, involved in unsaturated fatty acids biosynthesis. Catalyzes the dehydration of short chain beta-hydroxyacyl-ACPs and long chain saturated and unsaturated beta-hydroxyacyl-ACPs. This Lactiplantibacillus plantarum (strain ATCC BAA-793 / NCIMB 8826 / WCFS1) (Lactobacillus plantarum) protein is 3-hydroxyacyl-[acyl-carrier-protein] dehydratase FabZ.